The following is a 133-amino-acid chain: Nucleoid-associated protein Mb3743c (133 aa).

Residues 98 to 133 (GAMRPPAPPAAPPGAPGMPGMPGMPGAPGAPPVPGI) form a disordered region. Positions 102-113 (PPAPPAAPPGAP) are enriched in pro residues.

Belongs to the YbaB/EbfC family. Homodimer.

The protein localises to the cytoplasm. It is found in the nucleoid. Binds to DNA and alters its conformation. May be involved in regulation of gene expression, nucleoid organization and DNA protection. The protein is Nucleoid-associated protein Mb3743c of Mycobacterium bovis (strain ATCC BAA-935 / AF2122/97).